The primary structure comprises 139 residues: Ribosomal RNA large subunit methyltransferase H (139 aa).

S-adenosyl-L-methionine contacts are provided by residues leucine 56, glycine 88, and 107–112; that span reads LSLMTF.

Belongs to the RNA methyltransferase RlmH family. In terms of assembly, homodimer.

It is found in the cytoplasm. It catalyses the reaction pseudouridine(1915) in 23S rRNA + S-adenosyl-L-methionine = N(3)-methylpseudouridine(1915) in 23S rRNA + S-adenosyl-L-homocysteine + H(+). Its function is as follows. Specifically methylates the pseudouridine at position 1915 (m3Psi1915) in 23S rRNA. This chain is Ribosomal RNA large subunit methyltransferase H, found in Coprothermobacter proteolyticus (strain ATCC 35245 / DSM 5265 / OCM 4 / BT).